The chain runs to 29 residues: Cytochrome b6-f complex subunit 8 (29 aa).

The helical transmembrane segment at isoleucine 3–valine 23 threads the bilayer.

It belongs to the PetN family. The 4 large subunits of the cytochrome b6-f complex are cytochrome b6, subunit IV (17 kDa polypeptide, PetD), cytochrome f and the Rieske protein, while the 4 small subunits are PetG, PetL, PetM and PetN. The complex functions as a dimer.

It is found in the plastid. The protein localises to the chloroplast thylakoid membrane. Component of the cytochrome b6-f complex, which mediates electron transfer between photosystem II (PSII) and photosystem I (PSI), cyclic electron flow around PSI, and state transitions. The polypeptide is Cytochrome b6-f complex subunit 8 (Arabis hirsuta (Hairy rock-cress)).